A 453-amino-acid chain; its full sequence is Mogroside IIIx synthase (453 aa).

The active-site Proton acceptor is H21. Catalysis depends on D122, which acts as the Charge relay. Residues S273, Q336, W354, N355, S356, E359, D375, and Q376 each contribute to the UDP-alpha-D-glucose site.

This sequence belongs to the UDP-glycosyltransferase family. As to expression, highly expressed in mature fruits.

It carries out the reaction mogroside IIE + UDP-alpha-D-glucose = mogroside IIIX + UDP + H(+). The enzyme catalyses mogroside III + UDP-alpha-D-glucose = mogroside IV + UDP + H(+). The catalysed reaction is mogroside III + UDP-alpha-D-glucose = siamenoside I + UDP + H(+). It catalyses the reaction mogroside IV + UDP-alpha-D-glucose = mogroside V + UDP + H(+). It participates in secondary metabolite biosynthesis; terpenoid biosynthesis. In terms of biological role, UDP-glycosyltransferase involved in the biosynthesis of cucurbitacin and mogroside tetracyclic triterpene natural products (e.g. siamenoside I and mogrosides IV, V and VI). Cucurbitacins have cytotoxic properties and exhibit deterrent taste as a defense barrier against herbivores. Mogrosides are nonsugar highly oxygenated compounds used as high-intensity zero-calorie sweeteners; they also possess pharmacological properties such as regulating immunity, lowering blood sugar and lipid levels, protecting the liver, and acting as antioxidants and antitumor agents. Catalyzes the branched glucosylations of mogroside II-E, mogroside III and mogroside IV. The chain is Mogroside IIIx synthase from Siraitia grosvenorii (Monk's fruit).